Here is a 434-residue protein sequence, read N- to C-terminus: Serine hydroxymethyltransferase (434 aa).

Residues L133 and 137-139 each bind (6S)-5,6,7,8-tetrahydrofolate; that span reads GHL. Residue K242 is modified to N6-(pyridoxal phosphate)lysine.

Belongs to the SHMT family. In terms of assembly, homodimer. Pyridoxal 5'-phosphate serves as cofactor.

It localises to the cytoplasm. It catalyses the reaction (6R)-5,10-methylene-5,6,7,8-tetrahydrofolate + glycine + H2O = (6S)-5,6,7,8-tetrahydrofolate + L-serine. It participates in one-carbon metabolism; tetrahydrofolate interconversion. Its pathway is amino-acid biosynthesis; glycine biosynthesis; glycine from L-serine: step 1/1. In terms of biological role, catalyzes the reversible interconversion of serine and glycine with tetrahydrofolate (THF) serving as the one-carbon carrier. This reaction serves as the major source of one-carbon groups required for the biosynthesis of purines, thymidylate, methionine, and other important biomolecules. Also exhibits THF-independent aldolase activity toward beta-hydroxyamino acids, producing glycine and aldehydes, via a retro-aldol mechanism. The protein is Serine hydroxymethyltransferase of Hyphomicrobium methylovorum.